The chain runs to 490 residues: Cyclin-T1-3 (490 aa).

Disordered stretches follow at residues 275–391 (RVAP…GDVA) and 414–490 (AAED…RLRS). 2 stretches are compositionally biased toward polar residues: residues 282–298 (QGNDTEGSSASVVNQRA) and 352–365 (TANSNEGPNMSSTM). Composition is skewed to basic and acidic residues over residues 367-391 (AMKKIDKDKVKAALEKRRKSKGDVA) and 457-490 (QEYRSPELDNRKRKDMHEHRNYDRGERDLKRLRS).

The protein belongs to the cyclin family. Cyclin T subfamily.

The protein is Cyclin-T1-3 (CYCT1-3) of Oryza sativa subsp. japonica (Rice).